The following is a 611-amino-acid chain: UvrABC system protein C (611 aa).

In terms of domain architecture, GIY-YIG spans 14-91 (TSPGCYIHKD…IKENKPKYNI (78 aa)). The UVR domain occupies 196–231 (DQIIEDLRGKMAGAAQTMEFEKAAEYRDLIQSIGTL).

The protein belongs to the UvrC family. In terms of assembly, interacts with UvrB in an incision complex.

Its subcellular location is the cytoplasm. In terms of biological role, the UvrABC repair system catalyzes the recognition and processing of DNA lesions. UvrC both incises the 5' and 3' sides of the lesion. The N-terminal half is responsible for the 3' incision and the C-terminal half is responsible for the 5' incision. This Streptococcus gordonii (strain Challis / ATCC 35105 / BCRC 15272 / CH1 / DL1 / V288) protein is UvrABC system protein C.